The following is a 238-amino-acid chain: Ribitol-5-phosphate cytidylyltransferase 2 (238 aa).

Residues L7–G10 and G81–T87 contribute to the CTP site.

The protein belongs to the IspD/TarI cytidylyltransferase family. TarI subfamily.

The catalysed reaction is D-ribitol 5-phosphate + CTP + H(+) = CDP-L-ribitol + diphosphate. It functions in the pathway cell wall biogenesis; poly(ribitol phosphate) teichoic acid biosynthesis. In terms of biological role, catalyzes the transfer of the cytidylyl group of CTP to D-ribitol 5-phosphate. In Staphylococcus aureus (strain MRSA252), this protein is Ribitol-5-phosphate cytidylyltransferase 2.